Reading from the N-terminus, the 635-residue chain is Threonine--tRNA ligase (635 aa).

The TGS domain occupies 1 to 61; the sequence is MITVRLPDGS…EQDSDLSIIT (61 aa). A catalytic region spans residues 242–533; the sequence is DHRKLGRALD…LIENHAGALP (292 aa). Positions 333, 384, and 510 each coordinate Zn(2+).

The protein belongs to the class-II aminoacyl-tRNA synthetase family. As to quaternary structure, homodimer. Requires Zn(2+) as cofactor.

It is found in the cytoplasm. The enzyme catalyses tRNA(Thr) + L-threonine + ATP = L-threonyl-tRNA(Thr) + AMP + diphosphate + H(+). Functionally, catalyzes the attachment of threonine to tRNA(Thr) in a two-step reaction: L-threonine is first activated by ATP to form Thr-AMP and then transferred to the acceptor end of tRNA(Thr). Also edits incorrectly charged L-seryl-tRNA(Thr). The chain is Threonine--tRNA ligase from Herminiimonas arsenicoxydans.